The following is a 209-amino-acid chain: Uracil phosphoribosyltransferase (209 aa).

Residues Arg-79, Arg-104, and 131-139 (DPMLATGGS) each bind 5-phospho-alpha-D-ribose 1-diphosphate. Residues Ile-194 and 199 to 201 (GDA) contribute to the uracil site. 5-phospho-alpha-D-ribose 1-diphosphate is bound at residue Asp-200.

This sequence belongs to the UPRTase family. Requires Mg(2+) as cofactor.

It carries out the reaction UMP + diphosphate = 5-phospho-alpha-D-ribose 1-diphosphate + uracil. The protein operates within pyrimidine metabolism; UMP biosynthesis via salvage pathway; UMP from uracil: step 1/1. Allosterically activated by GTP. Catalyzes the conversion of uracil and 5-phospho-alpha-D-ribose 1-diphosphate (PRPP) to UMP and diphosphate. The protein is Uracil phosphoribosyltransferase of Macrococcus caseolyticus (strain JCSC5402) (Macrococcoides caseolyticum).